A 213-amino-acid polypeptide reads, in one-letter code: Pyridoxine/pyridoxamine 5'-phosphate oxidase 2 (213 aa).

Residues 9–12 (RQRY) and Lys67 each bind substrate. Residues 62–67 (RTVLLK), 77–78 (FT), Lys84, and Gln106 each bind FMN. Substrate contacts are provided by Tyr124, Arg128, and Ser132. FMN-binding positions include 141-142 (QS) and Trp186. Substrate is bound at residue 192–194 (RLH). FMN is bound at residue Arg196.

This sequence belongs to the pyridoxamine 5'-phosphate oxidase family. As to quaternary structure, homodimer. FMN is required as a cofactor.

It carries out the reaction pyridoxamine 5'-phosphate + O2 + H2O = pyridoxal 5'-phosphate + H2O2 + NH4(+). It catalyses the reaction pyridoxine 5'-phosphate + O2 = pyridoxal 5'-phosphate + H2O2. It functions in the pathway cofactor metabolism; pyridoxal 5'-phosphate salvage; pyridoxal 5'-phosphate from pyridoxamine 5'-phosphate: step 1/1. The protein operates within cofactor metabolism; pyridoxal 5'-phosphate salvage; pyridoxal 5'-phosphate from pyridoxine 5'-phosphate: step 1/1. Catalyzes the oxidation of either pyridoxine 5'-phosphate (PNP) or pyridoxamine 5'-phosphate (PMP) into pyridoxal 5'-phosphate (PLP). The protein is Pyridoxine/pyridoxamine 5'-phosphate oxidase 2 of Hydrogenovibrio crunogenus (strain DSM 25203 / XCL-2) (Thiomicrospira crunogena).